The primary structure comprises 99 residues: Bacterial microcompartment protein homohexamer (99 aa).

The region spanning 4–88 (ALGMIEVRGF…PHVNVDAALP (85 aa)) is the BMC domain.

It belongs to the bacterial microcompartments protein family. Homohexamer with a small central pore. When purified protein is examined by atomic force microscopy it dynamically makes uniform patches about 35 Angstroms thick with hexamers in the same orientation. In the BMC the concave side faces outward, with the N- and C-terminii exposed to the cytoplasm.

The protein resides in the bacterial microcompartment. Functionally, the only hexameric shell protein in this bacterium, it forms the majority of the bacterial microcompartment (BMC) shell. Expression of 5 proteins in E.coli (BMC-H (Hoch_5815), BMC-P (Hoch_5814), and 3 BMC-T (Hoch_5812, Hoch_5816, Hoch_3341)) forms a 40 nm artificial BMC with a molecular mass of 6.5 MDa. There are 60 BMC-H hexamers per BMC. The shell facets are 20-30 Angstroms thick (a single hexamer layer), with 1 of BMC-T trimers protruding to the exterior. This Haliangium ochraceum (strain DSM 14365 / JCM 11303 / SMP-2) protein is Bacterial microcompartment protein homohexamer.